The sequence spans 183 residues: UPF0398 protein PEPE_0933 (183 aa).

It belongs to the UPF0398 family.

This is UPF0398 protein PEPE_0933 from Pediococcus pentosaceus (strain ATCC 25745 / CCUG 21536 / LMG 10740 / 183-1w).